The following is a 530-amino-acid chain: Histone-arginine methyltransferase CARMER (530 aa).

An SAM-dependent MTase PRMT-type domain is found at Ala141 to His450. S-adenosyl-L-methionine is bound by residues Gln154, Arg163, Gly187, Glu209, Glu238, and Thr266. Arg501 bears the Asymmetric dimethylarginine; by autocatalysis mark.

The protein belongs to the class I-like SAM-binding methyltransferase superfamily. Protein arginine N-methyltransferase family. As to quaternary structure, homodimer. In terms of processing, the dimethylated protein is the major form.

Its subcellular location is the cytoplasm. The protein resides in the nucleus. It carries out the reaction L-arginyl-[protein] + 2 S-adenosyl-L-methionine = N(omega),N(omega)-dimethyl-L-arginyl-[protein] + 2 S-adenosyl-L-homocysteine + 2 H(+). Functionally, methylates (mono- and asymmetric dimethylation) the guanidino nitrogens of arginyl residues in proteins. May methylate histone H3 at 'Arg-17' and activate transcription via chromatin remodeling. The protein is Histone-arginine methyltransferase CARMER (Art4) of Drosophila sechellia (Fruit fly).